A 310-amino-acid chain; its full sequence is Methionyl-tRNA formyltransferase (310 aa).

111–114 (SLLP) is a (6S)-5,6,7,8-tetrahydrofolate binding site.

The protein belongs to the Fmt family.

It catalyses the reaction L-methionyl-tRNA(fMet) + (6R)-10-formyltetrahydrofolate = N-formyl-L-methionyl-tRNA(fMet) + (6S)-5,6,7,8-tetrahydrofolate + H(+). Functionally, attaches a formyl group to the free amino group of methionyl-tRNA(fMet). The formyl group appears to play a dual role in the initiator identity of N-formylmethionyl-tRNA by promoting its recognition by IF2 and preventing the misappropriation of this tRNA by the elongation apparatus. This is Methionyl-tRNA formyltransferase from Rhodopseudomonas palustris (strain ATCC BAA-98 / CGA009).